Here is a 557-residue protein sequence, read N- to C-terminus: Potassium-transporting ATPase potassium-binding subunit (557 aa).

12 consecutive transmembrane segments (helical) span residues 5 to 25, 63 to 83, 132 to 152, 170 to 190, 253 to 273, 283 to 303, 329 to 349, 356 to 376, 379 to 399, 416 to 436, 484 to 504, and 526 to 546; these read GFLL…PLGS, LSAI…MLLG, GLTV…FALI, LLRI…LFFI, FVQM…FGEV, LLWA…WAEV, VLVS…AVIA, ALGG…FGGV, GLYG…LMIG, LTAL…ALAM, LLAL…MAIA, and LFVG…FIPA.

The protein belongs to the KdpA family. In terms of assembly, the system is composed of three essential subunits: KdpA, KdpB and KdpC.

Its subcellular location is the cell inner membrane. Part of the high-affinity ATP-driven potassium transport (or Kdp) system, which catalyzes the hydrolysis of ATP coupled with the electrogenic transport of potassium into the cytoplasm. This subunit binds the periplasmic potassium ions and delivers the ions to the membrane domain of KdpB through an intramembrane tunnel. This is Potassium-transporting ATPase potassium-binding subunit from Escherichia coli (strain UTI89 / UPEC).